The chain runs to 453 residues: O-methyltransferase bik3 (453 aa).

Residues 1–25 (MVSNGISNGTNGTNGTTTNGTNGVN) form a disordered region. Positions 8–25 (NGTNGTNGTTTNGTNGVN) are enriched in low complexity. Asp305 is an S-adenosyl-L-methionine binding site. His355 (proton acceptor) is an active-site residue.

It belongs to the class I-like SAM-binding methyltransferase superfamily. Cation-independent O-methyltransferase family. COMT subfamily.

The protein operates within secondary metabolite biosynthesis. Its function is as follows. O-methyltransferase; part of the gene cluster that mediates the biosynthesis of bikaverin, a red pigment also considered as a mycotoxin. The first stage is catalyzed by the polyketide synthase bik1, which catalyzes the formation of the intermediate SMA76a also knowm as pre-bikaverin. FAD-dependent monooxygenase bik2 might then be responsible for the oxidation of pre-bikaverin to oxo-pre-bikaverin which is in turn methylated by the O-methyltransferase bik3 to me-oxo-pre-bikaverin. A further cycle of oxydation and methylation by bik2 and bik3 leads to the final product of bikaverin, via a nor-bikaverin intermediate. The polypeptide is O-methyltransferase bik3 (Gibberella fujikuroi (strain CBS 195.34 / IMI 58289 / NRRL A-6831) (Bakanae and foot rot disease fungus)).